The sequence spans 500 residues: MSYFPWLTIIVVFPISAGLSIFFLPHRGNKVVRWYTICICLLELLLMTYVFCYHFQLNDPLIQLDEDYEWINIFDFHWRPGIDGLSIGPILLTGFITTLATLAAWPVTRDSRLFHFLMLAMYSGQIGLFSSRDLLLFFLMWELELIPVYLLLSMWGGKKRLYSATKFILYTAGGSVFLLMGVLGMGLYGSNEPTLNFETSANQSYPVSLEILFYFGFLIAYAVKLPIIPLHTWLPDTHGEAHYSTCMLLAGILLKMGAYGLVRINMELLPHAHSIFSPWLVLAGTLQIIYAASTSLGQVNLKKRIAYSSVSHMGFTIIGIGSITDTGLNGAILQLLSHGFLGAALFFLAGTSCDRIRLIYLDEMGGISIPMPKIFTMFSSFSMASLALPGMSGFVAEAVVFFGIITSQKFLFLPKILITFVMAIGMILTPIYLLSMLRQIFYGYKLFNMTNSYFMDSGPRELFVSICIFLPVIGIGIYPDFVLSLSVDKVEAILSNYFYR.

Transmembrane regions (helical) follow at residues F4–L24, I37–L57, I87–V107, L113–S130, L134–M154, F167–L187, I211–H231, H242–V262, A272–A292, I305–D325, G330–G350, L386–T406, I416–M436, and L462–V482.

This sequence belongs to the complex I subunit 4 family.

It is found in the plastid. The protein localises to the chloroplast thylakoid membrane. The enzyme catalyses a plastoquinone + NADH + (n+1) H(+)(in) = a plastoquinol + NAD(+) + n H(+)(out). It catalyses the reaction a plastoquinone + NADPH + (n+1) H(+)(in) = a plastoquinol + NADP(+) + n H(+)(out). This is NAD(P)H-quinone oxidoreductase chain 4, chloroplastic from Acorus calamus var. americanus (American sweet flag).